A 225-amino-acid polypeptide reads, in one-letter code: MAGARLFRFRDEPGPGADPTVLEVRVPQVLHVQYGMYVWPCAVVLAQYLWFHRRVLPGKAVLEIGAGVSLPGILAAKCGAKVTLSDSPELPHCLDICWQSCQMNNLPQVQIVGLTWGHISKDTLSLPPQDIILGSDVFFEPEDFESILATVYFLMQKNPKVQFWSTYQVRSADWSLEGLLYKWDMRCVHIPLESFDADKEDIAESTLPGRHTIEMLIISFAKDSS.

Belongs to the methyltransferase superfamily. METTL23 family. As to quaternary structure, interacts with HSPA5, HSP90B1, TUBULIN, UGGT1 and UGGT2. Interacts with TET3. Interacts with STPG4.

The protein resides in the nucleus. It localises to the cytoplasm. It catalyses the reaction L-arginyl-[protein] + 2 S-adenosyl-L-methionine = N(omega),N(omega)-dimethyl-L-arginyl-[protein] + 2 S-adenosyl-L-homocysteine + 2 H(+). Histone methyltransferase that dimethylates histone H3 at 'Arg-17', forming asymmetric dimethylarginine (H3R17me2a), leading to activate transcription via chromatin remodeling. Maternal factor involved in epigenetic chromatin reprogramming of the paternal genome in the zygote: mediates H3R17me2a, promoting histone H3.3 incorporation in the male pronucleus, leading to TET3 recruitment and subsequent DNA demethylation. The protein is Histone-arginine methyltransferase METTL23 of Rattus norvegicus (Rat).